We begin with the raw amino-acid sequence, 348 residues long: Chloroacetanilide N-alkylformylase, oxygenase component (348 aa).

Positions 7-108 constitute a Rieske domain; that stretch reads WYAVAWCDEV…ARERHKLIWA (102 aa). Residues Cys-47, His-49, Cys-66, and His-69 each coordinate [2Fe-2S] cluster. Residues His-159 and His-164 each coordinate Fe cation. Substrate is bound at residue His-250. Asp-293 contributes to the Fe cation binding site.

The chloroacetanilide N-alkylformylase multicomponent enzyme system is composed of an oxygenase component (CndA) and an electron transfer component formed by a ferredoxin reductase (CndC1) and a ferredoxin (CndB1). In vitro, chloroacetanilide N-alkylformylase assays in which CndB1 is substituted for CndB2 demonstrate that the two enzymes possess nearly identical activities. Requires [2Fe-2S] cluster as cofactor.

The catalysed reaction is butachlor + 2 reduced [2Fe-2S]-[ferredoxin] + O2 + 2 H(+) = butyl formate + N-(2,6-diethylphenyl)-2-chloroacetamide + 2 oxidized [2Fe-2S]-[ferredoxin] + H2O. The enzyme catalyses alachlor + 2 reduced [2Fe-2S]-[ferredoxin] + O2 + 2 H(+) = methyl formate + N-(2,6-diethylphenyl)-2-chloroacetamide + 2 oxidized [2Fe-2S]-[ferredoxin] + H2O. It catalyses the reaction acetochlor + 2 reduced [2Fe-2S]-[ferredoxin] + O2 + 2 H(+) = N-(2-ethyl-6-methylphenyl)-2-chloroacetamide + ethyl formate + 2 oxidized [2Fe-2S]-[ferredoxin] + H2O. With respect to regulation, activity enhanced by Fe(2+) and Mg(2+) ions. Divalent cations such as Ca(2+), Cr(2+), Co(2+), and Mn(2+) show moderate inhibition of the enzyme, whereas heavy metal ions such as Ag(+), Cu(2+), Pb(2+), Hg(2+), Ni(2+) and Zn(2+) severely inhibit the activity. Its function is as follows. Component of the chloroacetanilide N-alkylformylase multicomponent enzyme system involved in the degradation of chloroacetanilide herbicides (N-alkoxyalkyl-N-chloroacetyl-substituted aniline derivatives). In vitro, catalyzes the N-dealkylation of butachlor, alachlor and acetochlor to yield 2-chloro-N-(2,6-diethylphenyl)acetamide (CDEPA) (for alachlor and butachlor) and 2-chloro-N-(2-methyl-6-ethylphenyl)acetamide (CMEPA) (for acetochlor). The polypeptide is Chloroacetanilide N-alkylformylase, oxygenase component (Rhizorhabdus wittichii (strain DC-6 / KACC 16600) (Sphingomonas wittichii)).